The following is a 433-amino-acid chain: MSSSERVPCDFCGERTAVLFCRADTAKLCLPCDQQVHTANLLSRKHVRSQICDNCGNEPVSVRCFTDNLILCQECDWDVHGSCSVSDAHVRSAVEGFSGCPSALELAALWGLDLEQGRKDEENQVPMMAMMMDNFGMQLDSWVLGSNELIVPSDTTFKKRGSCGSSCGRYKQVLCKQLEELLKSGVVGGDGDDGDRDRDCDREGACDGDGDGEAGEGLMVPEMSERLKWSRDVEEINGGGGGGVNQQWNATTTNPSGGQSSQIWDFNLGQSRGPEDTSRVEAAYVGKGAASSFTINNFVDHMNETCSTNVKGVKEIKKDDYKRSTSGQVQPTKSESNNRPITFGSEKGSNSSSDLHFTEHIAGTSCKTTRLVATKADLERLAQNRGDAMQRYKEKRKTRRYDKTIRYESRKARADTRLRVRGRFVKASEAPYP.

Zn(2+) is bound by residues C9, C12, C32, H37, C52, C55, C75, and H80. The B box-type 1; atypical zinc-finger motif lies at 9 to 51 (CDFCGERTAVLFCRADTAKLCLPCDQQVHTANLLSRKHVRSQI). Residues 52–94 (CDNCGNEPVSVRCFTDNLILCQECDWDVHGSCSVSDAHVRSAV) form a B box-type 2; atypical zinc finger. The tract at residues 319-353 (DDYKRSTSGQVQPTKSESNNRPITFGSEKGSNSSS) is disordered. Residues 324–340 (STSGQVQPTKSESNNRP) are compositionally biased toward polar residues. The stretch at 374-398 (TKADLERLAQNRGDAMQRYKEKRKT) forms a coiled coil. In terms of domain architecture, CCT spans 385 to 427 (RGDAMQRYKEKRKTRRYDKTIRYESRKARADTRLRVRGRFVKA).

This sequence belongs to the CONSTANS family.

It localises to the nucleus. The sequence is that of Zinc finger protein CONSTANS-LIKE 15 (COL15) from Arabidopsis thaliana (Mouse-ear cress).